The following is a 1250-amino-acid chain: Cell adhesion molecule-related/down-regulated by oncogenes (1250 aa).

The N-terminal stretch at 1 to 24 (MHPDLGPLWTLLYVLVILCSSVSS) is a signal peptide. Topologically, residues 25-962 (DLAPYFISEP…SPARSSDMLY (938 aa)) are extracellular. 5 Ig-like C2-type domains span residues 28–113 (PYFI…ATVS), 119–203 (DFDS…LKVE), 224–302 (PALS…KHVT), 309–395 (EHAS…GRLQ), and 404–515 (PVIV…AFLT). C49 and C96 are oxidised to a cystine. Residues N99, N179, N286, N293, N341, and N426 are each glycosylated (N-linked (GlcNAc...) asparagine). 2 disulfides stabilise this stretch: C140-C190 and C242-C289. Cystine bridges form between C332–C379 and C425–C499. Residues 524 to 534 (KAESVTPSEAS) are compositionally biased toward polar residues. The segment at 524 to 547 (KAESVTPSEASQNDERDPQDGSES) is disordered. A glycan (N-linked (GlcNAc...) asparagine) is linked at N569. Fibronectin type-III domains are found at residues 572–673 (VPDA…SKEK), 719–814 (APDR…VAGF), and 822–922 (PITG…TKVK). A glycan (N-linked (GlcNAc...) asparagine) is linked at N869. Positions 929–951 (DYPVKELSTPPSSSGNAGNVGPA) are disordered. Residues 963–983 (LIVGCVLGVMVLILMVFIALC) traverse the membrane as a helical segment. Over 984 to 1250 (LWKSRQQSTI…SVVLQQAQET (267 aa)) the chain is Cytoplasmic. Disordered regions lie at residues 1178–1208 (DNIS…AEDK) and 1223–1250 (DCGE…AQET). The segment covering 1193-1208 (EFSRGDSSGHSEAEDK) has biased composition (basic and acidic residues).

As to quaternary structure, part of a complex that contains BOC, CDON, NEO1, cadherins and CTNNB1. Interacts with NTN3. Interacts with DHH, IHH and SHH. In terms of processing, N-glycosylated. As to expression, highly expressed in somites and the dorsal lips of the neural tube during embryogenesis. Detected at very low levels in adult tissues.

It is found in the cell membrane. Functionally, component of a cell-surface receptor complex that mediates cell-cell interactions between muscle precursor cells. Promotes differentiation of myogenic cells. Required for response to NTN3 and activation of NFATC3. This is Cell adhesion molecule-related/down-regulated by oncogenes (Cdon) from Mus musculus (Mouse).